We begin with the raw amino-acid sequence, 276 residues long: Undecaprenyl-diphosphatase (276 aa).

Transmembrane regions (helical) follow at residues 43–63 (RAMA…VWEF), 85–105 (LNLL…ADTI), 109–129 (LFNA…MLWA), 183–203 (AATE…AVYS), 218–238 (VFAI…RGLL), and 254–274 (IAFG…WASA).

The protein belongs to the UppP family.

It localises to the cell inner membrane. It carries out the reaction di-trans,octa-cis-undecaprenyl diphosphate + H2O = di-trans,octa-cis-undecaprenyl phosphate + phosphate + H(+). Catalyzes the dephosphorylation of undecaprenyl diphosphate (UPP). Confers resistance to bacitracin. The polypeptide is Undecaprenyl-diphosphatase (Pseudomonas syringae pv. syringae (strain B728a)).